Reading from the N-terminus, the 547-residue chain is uncharacterized protein (547 aa).

The Cytoplasmic portion of the chain corresponds to 1–19 (MVRLNHAASYFMPIFCSTR). The chain crosses the membrane as a helical span at residues 20-40 (PHIVILSALFSISLFSLFYAS). The Vacuolar portion of the chain corresponds to 41–64 (SELLLHQYDDPLMFKPNSQDYFRT). A helical membrane pass occupies residues 65-85 (FLLGLFSPFLYYFLKTFLFNI). Residues 86 to 89 (NQRF) lie on the Cytoplasmic side of the membrane. A helical transmembrane segment spans residues 90–110 (LILNLIVDFPINDVFMLLILI). The Vacuolar segment spans residues 111-139 (GLAYPQVQDHEGGTIKHKECSWHIIPRQA). The chain crosses the membrane as a helical span at residues 140 to 160 (YIFGISWALGEFTICIIGNLF). Residues 161-340 (NYQEIADPNI…RFIAFSTAYQ (180 aa)) are Cytoplasmic-facing. Phosphoserine is present on serine 225. Positions 237–271 (PIKPLRSSSSTYGSIRQQPHENKKQLHVPDNSQDD) are disordered. Residues 242 to 253 (RSSSSTYGSIRQ) show a composition bias toward polar residues. A helical transmembrane segment spans residues 341–361 (LVTGLLLMILVVGSNIMLTIG). The Vacuolar segment spans residues 362–394 (ESLILSMYFVYVRGHEGLFTPVVNYFGSRTISN). A helical transmembrane segment spans residues 395–415 (FILCVIIPFISLNFLINTSIY). Over 416 to 523 (LRRELDDWFN…NWRALARNDS (108 aa)) the chain is Cytoplasmic. Residues 524-544 (FVLGVMVSWSLLVFVTGILST) traverse the membrane as a helical segment. Topologically, residues 545–547 (VYI) are vacuolar.

The protein localises to the vacuole membrane. This is an uncharacterized protein from Saccharomyces cerevisiae (strain ATCC 204508 / S288c) (Baker's yeast).